We begin with the raw amino-acid sequence, 318 residues long: MYSRIIGTGSYLPEKVLTNQDLESMVDTSDEWIRTRTGIERRHIAAEGQMASDLALEASRNAIEAADIQAKDIDLIIVATTTPDMIFPSTACILQNKLGMSNGPAFDVQAVCSGFIYALATADMFVSSGKARNALVVGAEVYSRIMDWNDRSTCVLFGDGAGAVILTRDQKPGILSSHLHADGSYSQVLTAPASIHSGKIQGTPFITMEGGTVFKFAVKVLEEAALEALQANQLQPSDIDWLIPHQANIRIITSTAKKLGIPEEKVVATVSQHGNTSAASVPLALDQAVRDGRIQPDQHIVLEGVGGGFTWGSVLVRW.

Residues cysteine 112 and histidine 245 contribute to the active site. Residues 246–250 (QANIR) are ACP-binding. Asparagine 275 is a catalytic residue.

The protein belongs to the thiolase-like superfamily. FabH family. In terms of assembly, homodimer.

It localises to the cytoplasm. It carries out the reaction malonyl-[ACP] + acetyl-CoA + H(+) = 3-oxobutanoyl-[ACP] + CO2 + CoA. The protein operates within lipid metabolism; fatty acid biosynthesis. Catalyzes the condensation reaction of fatty acid synthesis by the addition to an acyl acceptor of two carbons from malonyl-ACP. Catalyzes the first condensation reaction which initiates fatty acid synthesis and may therefore play a role in governing the total rate of fatty acid production. Possesses both acetoacetyl-ACP synthase and acetyl transacylase activities. Its substrate specificity determines the biosynthesis of branched-chain and/or straight-chain of fatty acids. This is Beta-ketoacyl-[acyl-carrier-protein] synthase III from Nitrosomonas europaea (strain ATCC 19718 / CIP 103999 / KCTC 2705 / NBRC 14298).